Reading from the N-terminus, the 604-residue chain is Elongation factor 4 (604 aa).

Residues 2–184 enclose the tr-type G domain; sequence DHIRNFSIIA…AVITRMPAPR (183 aa). GTP contacts are provided by residues 14–19 and 131–134; these read DHGKST and NKMD.

It belongs to the TRAFAC class translation factor GTPase superfamily. Classic translation factor GTPase family. LepA subfamily.

The protein localises to the cell inner membrane. It catalyses the reaction GTP + H2O = GDP + phosphate + H(+). Its function is as follows. Required for accurate and efficient protein synthesis under certain stress conditions. May act as a fidelity factor of the translation reaction, by catalyzing a one-codon backward translocation of tRNAs on improperly translocated ribosomes. Back-translocation proceeds from a post-translocation (POST) complex to a pre-translocation (PRE) complex, thus giving elongation factor G a second chance to translocate the tRNAs correctly. Binds to ribosomes in a GTP-dependent manner. The chain is Elongation factor 4 from Methylibium petroleiphilum (strain ATCC BAA-1232 / LMG 22953 / PM1).